Reading from the N-terminus, the 1087-residue chain is Error-prone DNA polymerase 3 (1087 aa).

Positions 1040–1064 are disordered; sequence AGRGDEFAHGSPGSSDTRDKSKPVV.

Belongs to the DNA polymerase type-C family. DnaE2 subfamily.

It localises to the cytoplasm. It catalyses the reaction DNA(n) + a 2'-deoxyribonucleoside 5'-triphosphate = DNA(n+1) + diphosphate. DNA polymerase involved in damage-induced mutagenesis and translesion synthesis (TLS). It is not the major replicative DNA polymerase. This Agrobacterium fabrum (strain C58 / ATCC 33970) (Agrobacterium tumefaciens (strain C58)) protein is Error-prone DNA polymerase 3.